The chain runs to 678 residues: DNA ligase (678 aa).

Residues 34–38 (DSEYD), 83–84 (SL), and Glu114 contribute to the NAD(+) site. The active-site N6-AMP-lysine intermediate is the Lys116. NAD(+) contacts are provided by Arg137, Glu176, Lys293, and Lys317. Positions 411, 414, 429, and 435 each coordinate Zn(2+). Residues 594-678 (PTRQPLNGES…LMAGYGQTLS (85 aa)) enclose the BRCT domain.

The protein belongs to the NAD-dependent DNA ligase family. LigA subfamily. Mg(2+) serves as cofactor. Mn(2+) is required as a cofactor.

It catalyses the reaction NAD(+) + (deoxyribonucleotide)n-3'-hydroxyl + 5'-phospho-(deoxyribonucleotide)m = (deoxyribonucleotide)n+m + AMP + beta-nicotinamide D-nucleotide.. DNA ligase that catalyzes the formation of phosphodiester linkages between 5'-phosphoryl and 3'-hydroxyl groups in double-stranded DNA using NAD as a coenzyme and as the energy source for the reaction. It is essential for DNA replication and repair of damaged DNA. The polypeptide is DNA ligase (Acinetobacter baumannii (strain AB307-0294)).